Here is a 457-residue protein sequence, read N- to C-terminus: Neuropeptide receptor npr-1 (457 aa).

The Extracellular portion of the chain corresponds to 1-22; the sequence is MEVENFTDCQVYWKVYPDPSQS. Residues 23–43 form a helical membrane-spanning segment; it reads IYAIVPFLTVYLFLFFLGLFG. Over 44–62 the chain is Cytoplasmic; the sequence is NVTLIYVTCSHKALLSVQN. The chain crosses the membrane as a helical span at residues 63–83; that stretch reads IFILNLAASDCMMCILSLPIT. Residues 84 to 100 are Extracellular-facing; sequence PITNVYKNWYFGNLLCH. Cys99 and Cys178 are disulfide-bonded. A helical membrane pass occupies residues 101–121; that stretch reads LIPCIQGISIFVCTFSLGAIA. At 122 to 140 the chain is on the cytoplasmic side; that stretch reads LDRYILVVRPHSTPLSQRG. The chain crosses the membrane as a helical span at residues 141 to 161; sequence AFLTTVLLWILSFVVTLPYAF. The Extracellular portion of the chain corresponds to 162 to 193; that stretch reads NMQMIEYTEERICGYFCTEKWESAKSRRAYTM. Residues 194–214 form a helical membrane-spanning segment; the sequence is IVMLAQFVVPFAVMAFCYANI. Residues 215–279 are Cytoplasmic-facing; the sequence is VSVLSKRAQT…LQNRRTTSIL (65 aa). The chain crosses the membrane as a helical span at residues 280-300; the sequence is VTMVVWFGITWLPHNVISLII. Residues 301–324 are Extracellular-facing; the sequence is EYDDTQSFFRLYGRDDYDISYLLN. A helical membrane pass occupies residues 325–345; it reads LFTHSIAMSNNVLNPVLYAWL. At 346–457 the chain is on the cytoplasmic side; the sequence is NPSFRQLVIK…IEFSVNDTLV (112 aa).

Belongs to the G-protein coupled receptor 1 family. Expressed in neurons, including neurons in the head, the ventral nerve cord, and the preanal ganglion.

The protein localises to the membrane. Functionally, G-protein coupled receptor for FARP(FMRFamide related peptide) neuropeptides. Activated by FARP neuropeptides flp-18 and flp-21. Plays a role in modulating social and feeding behavior. Required to modulate locomotion quiescence during the sleep-like state called lethargus, which occurs during molting between larval and adult stages, in part by regulating touch sensitivity. In Caenorhabditis elegans, this protein is Neuropeptide receptor npr-1.